The following is a 265-amino-acid chain: MIKWPWKVQESAHQTALPWQEALSIPLLTGLTEQEQSKLVTLAERFLQQKRLVPLQGFELDSLRSCRIALLFCLPVLELGLEWLDGFHEVLIYPAPFVVDDEWEDDIGLVHNQRIVQSGQSWQQGPIVLNWLDIQDSFDASGFNLIIHEVAHKLDTRNGDRASGVPFIPLREVAGWEHDLHAAMNNIQEEIELVGENAASIDAYAASDPAECFAVLSEYFFSAPELFAPRFPSLWQRFCQFYQQDPLQRLHRANDTDSFSATNVH.

4 residues coordinate Zn(2+): His111, His148, His152, and Glu211.

It belongs to the MtfA family. In terms of assembly, interacts with Mlc. It depends on Zn(2+) as a cofactor.

The protein localises to the cytoplasm. In terms of biological role, involved in the modulation of the activity of the glucose-phosphotransferase system (glucose-PTS). Interacts with the transcriptional repressor Mlc, preventing its interaction with DNA and leading to the modulation of expression of genes regulated by Mlc, including ptsG, which encodes the PTS system glucose-specific EIICB component. Its function is as follows. Shows zinc-dependent metallopeptidase activity. This is Mlc titration factor A from Escherichia coli (strain ATCC 8739 / DSM 1576 / NBRC 3972 / NCIMB 8545 / WDCM 00012 / Crooks).